The primary structure comprises 752 residues: NAD(P)H-quinone oxidoreductase subunit 5, chloroplastic (752 aa).

Helical transmembrane passes span 9-29 (WIIP…LLLF), 40-60 (WAFP…DLSI), 89-109 (IDPL…LVLF), 125-145 (FAYM…SNLI), 147-167 (IYIF…FWFT), 185-205 (GDFG…SFEF), 219-239 (NQVN…GAIA), 258-278 (TPIS…FLVA), 280-300 (LFPL…IGII), 327-347 (LGYM…FHLI), 354-374 (ALLF…LGYS), 396-416 (TAFL…CFWS), 425-445 (WLYS…TAFY), 549-569 (LFPM…GIPF), 608-628 (FVTN…IASF), and 728-748 (FYLL…YSVY).

It belongs to the complex I subunit 5 family. As to quaternary structure, NDH is composed of at least 16 different subunits, 5 of which are encoded in the nucleus.

The protein localises to the plastid. Its subcellular location is the chloroplast thylakoid membrane. It carries out the reaction a plastoquinone + NADH + (n+1) H(+)(in) = a plastoquinol + NAD(+) + n H(+)(out). The enzyme catalyses a plastoquinone + NADPH + (n+1) H(+)(in) = a plastoquinol + NADP(+) + n H(+)(out). NDH shuttles electrons from NAD(P)H:plastoquinone, via FMN and iron-sulfur (Fe-S) centers, to quinones in the photosynthetic chain and possibly in a chloroplast respiratory chain. The immediate electron acceptor for the enzyme in this species is believed to be plastoquinone. Couples the redox reaction to proton translocation, and thus conserves the redox energy in a proton gradient. This chain is NAD(P)H-quinone oxidoreductase subunit 5, chloroplastic (ndhF), found in Manihot esculenta (Cassava).